Here is a 403-residue protein sequence, read N- to C-terminus: Aminomethyltransferase, mitochondrial (403 aa).

The N-terminal 28 residues, 1 to 28 (MQRAMTVVPHLGLRLQALPLALGRPLSR), are a transit peptide targeting the mitochondrion. Residues glutamate 232, arginine 261, and tyrosine 399 each contribute to the substrate site.

This sequence belongs to the GcvT family. As to quaternary structure, the glycine cleavage system is composed of four proteins: P, T, L and H.

Its subcellular location is the mitochondrion. It catalyses the reaction N(6)-[(R)-S(8)-aminomethyldihydrolipoyl]-L-lysyl-[protein] + (6S)-5,6,7,8-tetrahydrofolate = N(6)-[(R)-dihydrolipoyl]-L-lysyl-[protein] + (6R)-5,10-methylene-5,6,7,8-tetrahydrofolate + NH4(+). The glycine cleavage system catalyzes the degradation of glycine. This chain is Aminomethyltransferase, mitochondrial, found in Canis lupus familiaris (Dog).